We begin with the raw amino-acid sequence, 274 residues long: Protein CURLY FLAG LEAF 1 (274 aa).

Residues 17–44 form a disordered region; that stretch reads SLNGGGGGGGGRRRGRRAAAAEGSDDSE. An EAR motif is present at residues 47 to 52; the sequence is TVELNS. In terms of domain architecture, WW spans 54–88; the sequence is VALPYHWEQCLDIRTGQVYYINWEDGTRTTIDPRS. Disordered stretches follow at residues 83–133 and 175–216; these read TIDP…SGYT and GRDG…SPTD. 3 stretches are compositionally biased toward low complexity: residues 87-106, 121-133, and 184-207; these read RSSS…SSSR, AAAA…SGYT, and SSSS…AVSS.

As to quaternary structure, binds to HDG1.

In terms of biological role, negatively regulates the cuticle development probably by interacting with the HD-ZIP IV transcription factor HDG1. The polypeptide is Protein CURLY FLAG LEAF 1 (Oryza sativa subsp. japonica (Rice)).